Consider the following 369-residue polypeptide: Protein pxr-1 (369 aa).

Residues 1 to 23 are disordered; that stretch reads MGLAAAKNKRKLGTDPNNTKWSR. The G-patch domain maps to 25-79; it reads ETTFGQKILRAQGWQPGEFLGAKDAAHAVHHTEASSSHIKVTLKDDNLGLGAKRN. The tract at residues 147–338 is disordered; that stretch reads EEDGVPQSDT…GTSTPTVTSS (192 aa). The segment covering 153–167 has biased composition (polar residues); sequence QSDTVDQQVETVPSQ. Over residues 218 to 227 the composition is skewed to basic residues; sequence SKKKEKKDKK. Residues 228-237 are compositionally biased toward basic and acidic residues; that stretch reads EKKDQKEKKD. Residues 267–292 are compositionally biased toward basic residues; that stretch reads KSKKDKKKEKKEKKDKKKDKKEKKRK. Residues 304 to 318 show a composition bias toward basic and acidic residues; sequence EDSKSKAQKRTKDGA. Residues 322-338 show a composition bias toward low complexity; it reads TSTPGGSGTSTPTVTSS.

This sequence belongs to the PINX1 family.

It localises to the nucleus. Its subcellular location is the nucleolus. Functionally, involved in rRNA-processing at A0, A1 and A2 sites and negatively regulates telomerase. This chain is Protein pxr-1 (pxr-1), found in Neurospora crassa (strain ATCC 24698 / 74-OR23-1A / CBS 708.71 / DSM 1257 / FGSC 987).